A 235-amino-acid polypeptide reads, in one-letter code: Pro-opiomelanocortin (235 aa).

The first 26 residues, 1-26 (MPRFCNSRSGALLLALLLQTSIDVWS), serve as a signal peptide directing secretion. F87 is modified (phenylalanine amide). Positions 88-128 (GPRNSSSAGGSAQRRAEEETAGGDGRPEPSPREGKRSYSME) are disordered. A compositionally biased stretch (basic and acidic residues) spans 112 to 128 (GRPEPSPREGKRSYSME). S124 carries the post-translational modification N-acetylserine; in Corticotropin. V136 carries the valine amide modification. N-linked (GlcNAc...) asparagine glycosylation occurs at N152. At S154 the chain carries Phosphoserine. The disordered stretch occupies residues 169–209 (EQPDGLEQVLEPDTEKADGPYRVEHFRWGNPPKDKRYGGFM). The segment covering 181–205 (DTEKADGPYRVEHFRWGNPPKDKRY) has biased composition (basic and acidic residues).

It belongs to the POMC family. Specific enzymatic cleavages at paired basic residues yield the different active peptides. ACTH and MSH are produced by the pituitary gland.

Its subcellular location is the secreted. In terms of biological role, stimulates the adrenal glands to release cortisol. Its function is as follows. Anorexigenic peptide. Increases the pigmentation of skin by increasing melanin production in melanocytes. Functionally, increases the pigmentation of skin by increasing melanin production in melanocytes. Endogenous orexigenic opiate. In terms of biological role, endogenous opiate. The chain is Pro-opiomelanocortin (Pomc) from Rattus norvegicus (Rat).